The following is a 216-amino-acid chain: Adenylate kinase (216 aa).

10–15 contributes to the ATP binding site; sequence GAGKGT. Positions 30 to 59 are NMP; sequence STGDMLRAAVKAGTPLGLELKKVMDAGQLV. Residues Thr31, Arg36, 57–59, 85–88, and Gln92 contribute to the AMP site; these read QLV and GFPR. The interval 122–159 is LID; that stretch reads GRRVHLASGRTYHIQYNPPKVEGKDDETGEDLIQRDDD. ATP-binding positions include Arg123 and 132–133; that span reads TY. Residues Arg156 and Arg167 each contribute to the AMP site. Residue Gly202 participates in ATP binding.

The protein belongs to the adenylate kinase family. As to quaternary structure, monomer.

It is found in the cytoplasm. The catalysed reaction is AMP + ATP = 2 ADP. Its pathway is purine metabolism; AMP biosynthesis via salvage pathway; AMP from ADP: step 1/1. In terms of biological role, catalyzes the reversible transfer of the terminal phosphate group between ATP and AMP. Plays an important role in cellular energy homeostasis and in adenine nucleotide metabolism. This Pseudomonas putida (strain ATCC 700007 / DSM 6899 / JCM 31910 / BCRC 17059 / LMG 24140 / F1) protein is Adenylate kinase.